The following is a 224-amino-acid chain: Small ribosomal subunit protein uS3c (224 aa).

The region spanning 43-124 (IKNYIQKNRK…RLNIAIEKVK (82 aa)) is the KH type-2 domain.

It belongs to the universal ribosomal protein uS3 family. In terms of assembly, part of the 30S ribosomal subunit.

It localises to the plastid. The protein localises to the chloroplast. This is Small ribosomal subunit protein uS3c (rps3) from Saccharum hybrid (Sugarcane).